Consider the following 427-residue polypeptide: GTPase Obg (427 aa).

In terms of domain architecture, Obg spans 1–158 (MFVDIAKIYV…LWVILELKVL (158 aa)). Residues 159-330 (ADVGLIGYPN…VLKRAYELLK (172 aa)) form the OBG-type G domain. GTP is bound by residues 165–172 (GYPNVGKS), 190–194 (FTTKY), 212–215 (DIPG), 282–285 (NKMD), and 311–313 (SAA). Residues S172 and T192 each contribute to the Mg(2+) site. The 81-residue stretch at 347 to 427 (FVYYKKKDVK…ILDVEFEYYE (81 aa)) folds into the OCT domain.

This sequence belongs to the TRAFAC class OBG-HflX-like GTPase superfamily. OBG GTPase family. Monomer. Requires Mg(2+) as cofactor.

The protein localises to the cytoplasm. In terms of biological role, an essential GTPase which binds GTP, GDP and possibly (p)ppGpp with moderate affinity, with high nucleotide exchange rates and a fairly low GTP hydrolysis rate. Plays a role in control of the cell cycle, stress response, ribosome biogenesis and in those bacteria that undergo differentiation, in morphogenesis control. In Caldicellulosiruptor saccharolyticus (strain ATCC 43494 / DSM 8903 / Tp8T 6331), this protein is GTPase Obg.